A 230-amino-acid chain; its full sequence is Cytochrome c oxidase subunit 2 (230 aa).

The Mitochondrial intermembrane portion of the chain corresponds to 1–14 (MAYPLQLGFQDATS). The helical transmembrane segment at 15–45 (PIMEELLHFHDHTLMIVFLISSLVLYIISTM) threads the bilayer. The Mitochondrial matrix segment spans residues 46–59 (LTTKLTHTNTMDAQ). Residues 60-87 (EVETIWTILPAIILILIALPSLRILYMM) traverse the membrane as a helical segment. Residues 88-230 (DEINNPNLTI…NWTSSMMSTS (143 aa)) lie on the Mitochondrial intermembrane side of the membrane. Cu cation-binding residues include H161, C196, E198, C200, H204, and M207. E198 serves as a coordination point for Mg(2+). Y218 bears the Phosphotyrosine mark.

This sequence belongs to the cytochrome c oxidase subunit 2 family. In terms of assembly, component of the cytochrome c oxidase (complex IV, CIV), a multisubunit enzyme composed of 14 subunits. The complex is composed of a catalytic core of 3 subunits MT-CO1, MT-CO2 and MT-CO3, encoded in the mitochondrial DNA, and 11 supernumerary subunits COX4I, COX5A, COX5B, COX6A, COX6B, COX6C, COX7A, COX7B, COX7C, COX8 and NDUFA4, which are encoded in the nuclear genome. The complex exists as a monomer or a dimer and forms supercomplexes (SCs) in the inner mitochondrial membrane with NADH-ubiquinone oxidoreductase (complex I, CI) and ubiquinol-cytochrome c oxidoreductase (cytochrome b-c1 complex, complex III, CIII), resulting in different assemblies (supercomplex SCI(1)III(2)IV(1) and megacomplex MCI(2)III(2)IV(2)). Found in a complex with TMEM177, COA6, COX18, COX20, SCO1 and SCO2. Interacts with TMEM177 in a COX20-dependent manner. Interacts with COX20. Interacts with COX16. It depends on Cu cation as a cofactor.

It is found in the mitochondrion inner membrane. It catalyses the reaction 4 Fe(II)-[cytochrome c] + O2 + 8 H(+)(in) = 4 Fe(III)-[cytochrome c] + 2 H2O + 4 H(+)(out). In terms of biological role, component of the cytochrome c oxidase, the last enzyme in the mitochondrial electron transport chain which drives oxidative phosphorylation. The respiratory chain contains 3 multisubunit complexes succinate dehydrogenase (complex II, CII), ubiquinol-cytochrome c oxidoreductase (cytochrome b-c1 complex, complex III, CIII) and cytochrome c oxidase (complex IV, CIV), that cooperate to transfer electrons derived from NADH and succinate to molecular oxygen, creating an electrochemical gradient over the inner membrane that drives transmembrane transport and the ATP synthase. Cytochrome c oxidase is the component of the respiratory chain that catalyzes the reduction of oxygen to water. Electrons originating from reduced cytochrome c in the intermembrane space (IMS) are transferred via the dinuclear copper A center (CU(A)) of subunit 2 and heme A of subunit 1 to the active site in subunit 1, a binuclear center (BNC) formed by heme A3 and copper B (CU(B)). The BNC reduces molecular oxygen to 2 water molecules using 4 electrons from cytochrome c in the IMS and 4 protons from the mitochondrial matrix. The protein is Cytochrome c oxidase subunit 2 (MT-CO2) of Ornithorhynchus anatinus (Duckbill platypus).